We begin with the raw amino-acid sequence, 37 residues long: Large ribosomal subunit protein bL12 (37 aa).

The protein belongs to the bacterial ribosomal protein bL12 family. In terms of assembly, homodimer. Part of the ribosomal stalk of the 50S ribosomal subunit. Forms a multimeric L10(L12)X complex, where L10 forms an elongated spine to which 2 to 4 L12 dimers bind in a sequential fashion. Binds GTP-bound translation factors.

In terms of biological role, forms part of the ribosomal stalk which helps the ribosome interact with GTP-bound translation factors. Is thus essential for accurate translation. The chain is Large ribosomal subunit protein bL12 (rplL) from Clostridium pasteurianum.